Here is a 555-residue protein sequence, read N- to C-terminus: Cytochrome P450 monooxygenase abl2 (555 aa).

Transmembrane regions (helical) follow at residues 38-58 and 141-161; these read SFDLFSKLAGLALLSFAALFI and VFIGAVAKVGGAVGISMAPLA. Residues Asn-325 and Asn-360 are each glycosylated (N-linked (GlcNAc...) asparagine). Cys-489 contributes to the heme binding site.

This sequence belongs to the cytochrome P450 family. Heme serves as cofactor.

The protein localises to the membrane. Its pathway is hormone biosynthesis. Its function is as follows. Cytochrome P450 monooxygenase; part of the gene cluster that mediates the biosynthesis of abscisic acid (ABA), a phytohormone that acts antagonistically toward salicylic acid (SA), jasmonic acid (JA) and ethylene (ETH) signaling, to impede plant defense responses. The first step of the pathway catalyzes the reaction from farnesyl diphosphate to alpha-ionylideneethane performed by the alpha-ionylideneethane synthase abl3 via a three-step reaction mechanism involving 2 neutral intermediates, beta-farnesene and allofarnesene. The cytochrome P450 monooxygenase abl1 might then be involved in the conversion of alpha-ionylideneethane to alpha-ionylideneacetic acid. Alpha-ionylideneacetic acid is further converted to abscisic acid in 2 steps involving the cytochrome P450 monooxygenase abl2 and the short-chain dehydrogenase/reductase abl4, via the intermediates 1'-deoxy-ABA or 1',4'-trans-diol-ABA, depending on the order of action of these 2 enzymes. Abl2 is responsible for the hydroxylation of carbon atom C-1' and abl4 might be involved in the oxidation of the C-4' carbon atom. The protein is Cytochrome P450 monooxygenase abl2 of Leptosphaeria maculans (strain JN3 / isolate v23.1.3 / race Av1-4-5-6-7-8) (Blackleg fungus).